Reading from the N-terminus, the 729-residue chain is Probable pre-mRNA-splicing factor ATP-dependent RNA helicase DEAH3 (729 aa).

Residues 75-244 (LNTLNSNQTL…FSGAPLMKVP (170 aa)) form the Helicase ATP-binding domain. 88–95 (GETGSGKT) is a binding site for ATP. Residues 191–194 (DEAH) carry the DEAH box motif. Residues 269 to 449 (TVVQIHMCEP…NTVLTLKKLG (181 aa)) enclose the Helicase C-terminal domain.

Belongs to the DEAD box helicase family. DEAH subfamily. PRP43 sub-subfamily.

The catalysed reaction is ATP + H2O = ADP + phosphate + H(+). Its function is as follows. May be involved in pre-mRNA splicing. This chain is Probable pre-mRNA-splicing factor ATP-dependent RNA helicase DEAH3, found in Arabidopsis thaliana (Mouse-ear cress).